A 650-amino-acid polypeptide reads, in one-letter code: Phosphomethylpyrimidine synthase (650 aa).

Substrate is bound by residues Asn-241, Met-270, Tyr-299, His-335, 355–357 (SRG), 396–399 (DGLR), and Glu-435. His-439 is a binding site for Zn(2+). Position 462 (Tyr-462) interacts with substrate. Zn(2+) is bound at residue His-503. [4Fe-4S] cluster contacts are provided by Cys-583, Cys-586, and Cys-591.

The protein belongs to the ThiC family. As to quaternary structure, homodimer. It depends on [4Fe-4S] cluster as a cofactor.

It carries out the reaction 5-amino-1-(5-phospho-beta-D-ribosyl)imidazole + S-adenosyl-L-methionine = 4-amino-2-methyl-5-(phosphooxymethyl)pyrimidine + CO + 5'-deoxyadenosine + formate + L-methionine + 3 H(+). It participates in cofactor biosynthesis; thiamine diphosphate biosynthesis. Functionally, catalyzes the synthesis of the hydroxymethylpyrimidine phosphate (HMP-P) moiety of thiamine from aminoimidazole ribotide (AIR) in a radical S-adenosyl-L-methionine (SAM)-dependent reaction. The protein is Phosphomethylpyrimidine synthase of Pseudoalteromonas translucida (strain TAC 125).